The sequence spans 156 residues: Maintenance of carboxysome distribution protein B (156 aa).

The required for interaction with McdA:DNA complex stretch occupies residues 1–55; it reads MSNNALDRLINKQKPKVPPRNDVVSESVSNDIKTQGQQELNTSLPPSDTKATPEE. The segment at 1–79 is disordered; sequence MSNNALDRLI…QKPKLSPDTF (79 aa). The span at 24 to 50 shows a compositional bias: polar residues; that stretch reads VSESVSNDIKTQGQQELNTSLPPSDTK. Residues 51-63 show a composition bias toward basic and acidic residues; sequence ATPEEMPTSHESE. Residues 122-156 are a coiled coil; the sequence is PEELAQVIQLAQERLSQRKAIADYKRAKTMQERFL.

In terms of assembly, homodimerizes; may exist in higher order oligomers in solution. Forms a complex with McdA:DNA. Homohexamerizes, interacts with shell components of the carboxysome.

The protein resides in the carboxysome. In terms of biological role, mcdA and McdB together mediate carboxysome (Cb) spacing, size, ultrastructure and probably inheritance in the cell, together they prevent Cb aggregation. McdA is an ATPase that forms dynamic gradients on the nucleoid in response to adapter protein McdB, which associates with carboxysomes. The interplay between McdA gradients on the nucleoid and McdB-bound carboxysomes result in the equal spacing of Cbs along the cell length. Stimulates the ATPase activity of McdA, causing McdA to be released from DNA. Undergoes liquid-liquid phase separation. Incorrect positioning (aggregation) of carboxysomes results in reduced CO(2) fixation by encapsulated ribulose-1,5-bisphosphate carboxylase (RuBisCO, cbbL/cbbS), which leads to slower growth. The sequence is that of Maintenance of carboxysome distribution protein B from Gloeothece citriformis (strain PCC 7424) (Cyanothece sp. (strain PCC 7424)).